The sequence spans 299 residues: Hydroxymethylglutaryl-CoA lyase YngG (299 aa).

The region spanning 7-274 (VTIKEVGPRD…KTNVKLEKLL (268 aa)) is the Pyruvate carboxyltransferase domain. Arg-15 contacts substrate. A divalent metal cation-binding residues include Asp-16, His-207, and His-209. Residue Cys-240 is part of the active site. Residue Asn-249 coordinates a divalent metal cation.

The protein belongs to the HMG-CoA lyase family. As to quaternary structure, homodimer and homotetramer.

It carries out the reaction (3S)-3-hydroxy-3-methylglutaryl-CoA = acetoacetate + acetyl-CoA. It functions in the pathway metabolic intermediate metabolism; (S)-3-hydroxy-3-methylglutaryl-CoA degradation; acetoacetate from (S)-3-hydroxy-3-methylglutaryl-CoA: step 1/1. Functionally, involved in the catabolism of branched amino acids such as leucine. The polypeptide is Hydroxymethylglutaryl-CoA lyase YngG (yngG) (Bacillus subtilis (strain 168)).